A 207-amino-acid chain; its full sequence is Dephospho-CoA kinase (207 aa).

Residues 10 to 207 (ILGLTGGIGS…FYLTLRGGQS (198 aa)) enclose the DPCK domain. 18 to 23 (GSGKSA) serves as a coordination point for ATP.

The protein belongs to the CoaE family.

It is found in the cytoplasm. The enzyme catalyses 3'-dephospho-CoA + ATP = ADP + CoA + H(+). Its pathway is cofactor biosynthesis; coenzyme A biosynthesis; CoA from (R)-pantothenate: step 5/5. In terms of biological role, catalyzes the phosphorylation of the 3'-hydroxyl group of dephosphocoenzyme A to form coenzyme A. The sequence is that of Dephospho-CoA kinase from Pseudomonas savastanoi pv. phaseolicola (strain 1448A / Race 6) (Pseudomonas syringae pv. phaseolicola (strain 1448A / Race 6)).